The primary structure comprises 1551 residues: Transient receptor potential cation channel subfamily M member-like 2 (1551 aa).

The Cytoplasmic portion of the chain corresponds to 1 to 714 (MGKDSFTPLY…WMGTMAMNTR (714 aa)). Residues 715 to 730 (WWKVLVCLYLPVLIFP) lie within the membrane without spanning it. Residues 731–837 (IIYFVPDEQH…DRIMHFYSAP (107 aa)) lie on the Cytoplasmic side of the membrane. Residues 744–767 (AAEREHQKSLNQKSSKVKSHKEKN) form a disordered region. A helical transmembrane segment spans residues 838–858 (FSKFVGNVVGYLAFIFLYAYV). Residues 859 to 877 (VLFNFPRFDPAKTLGGIHP) lie on the Extracellular side of the membrane. Residues 878–898 (TEIVLYFWVFTILIEEIRQLA) form a helical membrane-spanning segment. Ca(2+) contacts are provided by E893 and Q896. The Cytoplasmic segment spans residues 899-916 (AKPPKYIKDKVSVYFSDT). A helical transmembrane segment spans residues 917 to 937 (WNFVDIFSLTVFIIAIILRFF). Ca(2+)-binding residues include N918 and D921. The Extracellular segment spans residues 938-947 (TNSRIFTASR). A helical transmembrane segment spans residues 948–968 (IILSLDIIFFIVRSLQIFSVN). Residues 969–980 (RLLGPKLVMIQK) lie on the Cytoplasmic side of the membrane. The chain crosses the membrane as a helical span at residues 981–1001 (MMQDLAQFIIILAVFTIAYGI). The Extracellular segment spans residues 1002-1018 (ALHAVMFPSPGIYARNN). N1017 carries an N-linked (GlcNAc...) asparagine glycan. Residues 1019–1034 (TWVTITSVVQYPYWQM) constitute an intramembrane region (pore-forming). Residues 1035–1037 (YGE) carry the Selectivity filter motif. Residues 1035–1059 (YGELFLDEIQGEKPKEFGEVDPDGR) lie on the Extracellular side of the membrane. A Prevents fast channel inactivation motif is present at residues 1040 to 1042 (LDE). Residues 1060-1080 (WLSPLLLAIYMVFTNILLLNL) form a helical membrane-spanning segment. Topologically, residues 1081-1116 (LIAIFNYTFERVQEDSDKVWKFQRYDLVQEYHSRPV) are cytoplasmic. An intramembrane segment occupies 1117–1135 (FAPPLVLLGHILIFIRWVW). Over 1136-1551 (RMCRCGHPPR…KVAKMRDAAF (416 aa)) the chain is Cytoplasmic. A coiled-coil region spans residues 1184–1209 (LEERVRALGDRVDCINSQLNRVLDSM). Residues 1394–1546 (WKRTSAGVML…VSILEKVAKM (153 aa)) enclose the Nudix hydrolase domain. The Nudix box signature appears at 1428-1449 (GMVEPGQLVTQALKAEFGEEAM).

Belongs to the transient receptor (TC 1.A.4) family. LTrpC subfamily. TRPM2 sub-subfamily. As to quaternary structure, homotetramer.

The protein localises to the cell membrane. Activated by phosphatidylinositol 4,5-bisphosphate (PIP2). Although PIP2 is essential for the channel activation, its contribution to the level of channel activity is minimal. Also activated by diphosphate ribose-2'-phosphate. Upon binding to ADPR, channel activation requires only a short initial cytosolic Ca(2+) increase, then the activation is sustained by the uptake of extracellular Ca(2+). Activated by 2-aminoethyl diphenylborinate (2-APB) in a Ca(2+)-dependent manner. 2-APB prevents the inactivation of the channel. Functionally, nonselective, voltage-independent cation channel that mediates Ca(2+) and to a lesser extent Na(+) influx, leading to increased cytoplasmic Ca(2+) levels. Functions as a ligand-gated ion channel. Binding of ADP-ribose causes a conformation change; the channel is primed but still requires Ca(2+) binding to trigger channel opening. May have ADP-ribose pyrophosphatase activity which reduces ADP-ribose levels induced by oxidative stress, thus preventing the channel activation by reactive oxygen species. The polypeptide is Transient receptor potential cation channel subfamily M member-like 2 (Nematostella vectensis (Starlet sea anemone)).